The sequence spans 59 residues: Cecropin-A (59 aa).

The signal sequence occupies residues Met1–Ala23. The propeptide at Gly58–Lys59 is removed in mature form (AeaeCec2).

As to expression, hemolymph (at protein level).

The protein localises to the secreted. In terms of biological role, antimicrobial peptide. Antibacterial activity against Gram-negative bacteria E.coli D22 and D31, E.carotovora, K.pneumoniae, P.aeruginosa, S.typhimurium, E.cloacae B12 and X.campestris and Gram-positive bacteria A.viridans, M.luteus, B.megaterium and S.pyogenes. Possesses antifungal activity against F.oxysporum, F.culmorum and N.crassa, C.albicans, C.neoformans and S.cerevisiae. No activity against Gram-negative S.marcescens Db11, Gram-positive B.cereus, B.subtilis, B.thuringiensis, S.aureus and L.monocytogenes, the fungi A.fumigatus and B.bassiana and C.glabrata. Partially neutralizes lipopolysaccharides (LPS). Exhibits anti-inflammatory properties: inhibits LPS-induced iNOS/NOS2 transcription, nitric oxide (NO) and pro-inflammatory cytokine production in mouse macrophages and human peripheral blood mononuclear cells (PBMCs); inhibits LPS-induced activation of MAPK and NF-kappa-B signaling pathways in mouse macrophages. The sequence is that of Cecropin-A (CECA) from Aedes aegypti (Yellowfever mosquito).